We begin with the raw amino-acid sequence, 240 residues long: Uridylate kinase (240 aa).

Residue 14 to 17 coordinates ATP; that stretch reads KLSG. Glycine 56 serves as a coordination point for UMP. ATP contacts are provided by glycine 57 and arginine 61. Residues aspartate 76 and 137–144 each bind UMP; that span reads TGNPFFTT. Residues threonine 164, tyrosine 170, and aspartate 173 each contribute to the ATP site.

This sequence belongs to the UMP kinase family. As to quaternary structure, homohexamer.

Its subcellular location is the cytoplasm. It catalyses the reaction UMP + ATP = UDP + ADP. It functions in the pathway pyrimidine metabolism; CTP biosynthesis via de novo pathway; UDP from UMP (UMPK route): step 1/1. Inhibited by UTP. In terms of biological role, catalyzes the reversible phosphorylation of UMP to UDP. In Paracidovorax citrulli (strain AAC00-1) (Acidovorax citrulli), this protein is Uridylate kinase.